Consider the following 119-residue polypeptide: Large ribosomal subunit protein bL20 (119 aa).

It belongs to the bacterial ribosomal protein bL20 family.

Its function is as follows. Binds directly to 23S ribosomal RNA and is necessary for the in vitro assembly process of the 50S ribosomal subunit. It is not involved in the protein synthesizing functions of that subunit. This is Large ribosomal subunit protein bL20 from Shewanella sediminis (strain HAW-EB3).